The sequence spans 772 residues: Endoplasmic reticulum membrane sensor NFE2L1 (772 aa).

Residues 7 to 24 (YFTEGLIQFTILLSLIGV) traverse the membrane as a helical; Signal-anchor for type II membrane protein segment. Residues 191–199 (IFDYSHRQK) form a cholesterol recognition/amino acid consensus (CRAC) region region. Over residues 198–216 (QKESEVDKELSDGRERGDG) the composition is skewed to basic and acidic residues. Positions 198-223 (QKESEVDKELSDGRERGDGWRSAGGQ) are disordered. Residues Asn332, Asn340, Asn362, Asn402, Asn407, Asn414, Asn425, and Asn429 are each glycosylated (N-linked (GlcNAc...) asparagine). The segment at 472 to 531 (EEEFDSDSGLSLDSGHSPASLSSSEASSSSSSSSSSSSSSSSSSSSFSEEGAVGYSSDSE) is disordered. A compositionally biased stretch (low complexity) spans 478–519 (DSGLSLDSGHSPASLSSSEASSSSSSSSSSSSSSSSSSSSFS). Residue Asn574 is glycosylated (N-linked (GlcNAc...) asparagine). Positions 581–613 (PGTLDPEEPKLPSVGKKSSKEKPSEFLDKQMSR) are disordered. A compositionally biased stretch (basic and acidic residues) spans 598-613 (SSKEKPSEFLDKQMSR). The region spanning 654 to 717 (LIRDIRRRGK…RQMKQKVQNL (64 aa)) is the bZIP domain. The segment at 656–675 (RDIRRRGKNKMAAQNCRKRK) is basic motif. Residues 682 to 696 (LERDVEDLQRDKSKL) form a leucine-zipper region. Positions 761-768 (RRQERKQK) match the Nuclear localization signal motif.

This sequence belongs to the bZIP family. CNC subfamily. In terms of assembly, interacts (via the bZIP domain) with small MAF protein (MAFF, MAFG or MAFK); required for binding to antioxidant response elements (AREs) on DNA. Post-translationally, cleaved at Leu-104 following retrotranslocation, releasing the protein from the endoplasmic reticulum membrane and forming the transcription factor NRF1 that translocates into the nucleus.

Its subcellular location is the endoplasmic reticulum membrane. It localises to the nucleus. Functionally, endoplasmic reticulum membrane sensor that translocates into the nucleus in response to various stresses to act as a transcription factor. Constitutes a precursor of the transcription factor NRF1. Able to detect various cellular stresses, such as cholesterol excess, oxidative stress or proteasome inhibition. In response to stress, it is released from the endoplasmic reticulum membrane following cleavage and translocates into the nucleus to form the transcription factor NRF1. Acts as a key sensor of cholesterol excess: in excess cholesterol conditions, the endoplasmic reticulum membrane form of the protein directly binds cholesterol via its CRAC motif, preventing cleavage and release of the transcription factor NRF1, thereby allowing expression of genes promoting cholesterol removal. Involved in proteasome homeostasis: in response to proteasome inhibition, it is released from the endoplasmic reticulum membrane, translocates to the nucleus and activates expression of genes encoding proteasome subunits. Its function is as follows. CNC-type bZIP family transcription factor that translocates to the nucleus and regulates expression of target genes in response to various stresses. Heterodimerizes with small-Maf proteins (MAFF, MAFG or MAFK) and binds DNA motifs including the antioxidant response elements (AREs), which regulate expression of genes involved in oxidative stress response. Activates or represses expression of target genes, depending on the context. Plays a key role in cholesterol homeostasis by acting as a sensor of cholesterol excess: in low cholesterol conditions, translocates into the nucleus and represses expression of genes involved in defense against cholesterol excess. In excess cholesterol conditions, the endoplasmic reticulum membrane form of the protein directly binds cholesterol via its CRAC motif, preventing cleavage and release of the transcription factor NRF1, thereby allowing expression of genes promoting cholesterol removal. Critical for redox balance in response to oxidative stress: acts by binding the AREs motifs on promoters and mediating activation of oxidative stress response genes. Involved in proteasome homeostasis: in response to proteasome inhibition, mediates the 'bounce-back' of proteasome subunits by translocating into the nucleus and activating expression of genes encoding proteasome subunits. The polypeptide is Endoplasmic reticulum membrane sensor NFE2L1 (Gallus gallus (Chicken)).